The sequence spans 311 residues: tRNA dimethylallyltransferase (311 aa).

Residue 13–20 (GPTASGKT) coordinates ATP. 15–20 (TASGKT) is a substrate binding site. Interaction with substrate tRNA regions lie at residues 38 to 41 (DSMQ) and 166 to 170 (QRGLR).

It belongs to the IPP transferase family. In terms of assembly, monomer. Mg(2+) serves as cofactor.

It carries out the reaction adenosine(37) in tRNA + dimethylallyl diphosphate = N(6)-dimethylallyladenosine(37) in tRNA + diphosphate. Functionally, catalyzes the transfer of a dimethylallyl group onto the adenine at position 37 in tRNAs that read codons beginning with uridine, leading to the formation of N6-(dimethylallyl)adenosine (i(6)A). The sequence is that of tRNA dimethylallyltransferase from Staphylococcus aureus (strain MSSA476).